The sequence spans 249 residues: Sugar fermentation stimulation protein homolog (249 aa).

The protein belongs to the SfsA family.

This Prochlorococcus marinus (strain MIT 9515) protein is Sugar fermentation stimulation protein homolog.